A 480-amino-acid chain; its full sequence is M-phase inducer phosphatase cdc-25.2 (480 aa).

Polar residues predominate over residues 1–20 (MNRPSQISQDVAQPLSNQHE). The tract at residues 1–35 (MNRPSQISQDVAQPLSNQHETAMMSSDEDSMSRDS) is disordered. The 107-residue stretch at 243–349 (FDDKYILIDC…FFFAANEANI (107 aa)) folds into the Rhodanese domain. The tract at residues 411 to 452 (TSAPSTSTENIDTNDDCQKSRTPAVPRIASRRNLFSDPSHSP) is disordered.

It belongs to the MPI phosphatase family.

It carries out the reaction O-phospho-L-tyrosyl-[protein] + H2O = L-tyrosyl-[protein] + phosphate. Functionally, required for intestinal cell division following the 16E cell stage of embryogenesis. Regulates intestinal cell divisions and binucleations probably by modulating the activity of the cell cycle regulator wee-1.3 and by activating the cdk-1/cyb-1 complex. Plays a role in male tail development, via regulation of the cell divisions of the ray precursor cell lineages, perhaps acting together with cell cycle regulators cyl-1, cdk-1, cyb-3, and cyd-1. The sequence is that of M-phase inducer phosphatase cdc-25.2 from Caenorhabditis elegans.